Here is a 97-residue protein sequence, read N- to C-terminus: Defensin-like protein 245 (97 aa).

The first 24 residues, 1 to 24 (MKFAAILLVTCVLFSLLPSHLSQG), serve as a signal peptide directing secretion. Cystine bridges form between C39/C96, C50/C79, C58/C89, and C77/C91.

Belongs to the DEFL family. In terms of tissue distribution, flower buds and roots.

It localises to the secreted. This Arabidopsis thaliana (Mouse-ear cress) protein is Defensin-like protein 245 (SCRL4).